Here is a 228-residue protein sequence, read N- to C-terminus: MPVKGGTKCIKYLLFGFNFIFWLAGIAVLAIGLWLRFDSQTKSIFEQETNNNNSSFYTGVYILIGAGALMMLVGFLGCCGAVQESQCMLGLFFGFLLVIFAIEIAAAIWGYSHKDEVIKEVQEFYKDTYNKLKTKDEPQRETLKAIHYALNCCGLAGGVEQFISDICPKKDVLETFTVKSCPDAIKEVFDNKFHIIGAVGIGIAVVMIFGMIFSMILCCAIRRNREMV.

Topologically, residues 2 to 12 (PVKGGTKCIKY) are cytoplasmic. Cys9 carries S-palmitoyl cysteine lipidation. Residues 13–33 (LLFGFNFIFWLAGIAVLAIGL) form a helical membrane-spanning segment. The Extracellular portion of the chain corresponds to 34-55 (WLRFDSQTKSIFEQETNNNNSS). Asn52 and Asn53 each carry an N-linked (GlcNAc...) asparagine glycan. The helical transmembrane segment at 56-76 (FYTGVYILIGAGALMMLVGFL) threads the bilayer. Over 77-87 (GCCGAVQESQC) the chain is Cytoplasmic. Residues Cys78, Cys79, and Cys87 are each lipidated (S-palmitoyl cysteine). A helical membrane pass occupies residues 88–111 (MLGLFFGFLLVIFAIEIAAAIWGY). The Extracellular portion of the chain corresponds to 112 to 195 (SHKDEVIKEV…KEVFDNKFHI (84 aa)). 2 cysteine pairs are disulfide-bonded: Cys152-Cys181 and Cys153-Cys167. The chain crosses the membrane as a helical span at residues 196–221 (IGAVGIGIAVVMIFGMIFSMILCCAI). S-palmitoyl cysteine attachment occurs at residues Cys218 and Cys219. Residues 222–228 (RRNREMV) lie on the Cytoplasmic side of the membrane.

It belongs to the tetraspanin (TM4SF) family. In terms of assembly, forms both disulfide-linked homodimers and higher homooligomers as well as heterooligomers with other members of the tetraspanin family. Interacts (via the second extracellular domain) with integrin ITGAV:ITGB3. Interacts with integrin ITGA6:ITGB1; interaction takes place in oocytes and is involved in sperm-egg fusion. Part of integrin-tetraspanin complexes composed of CD81, beta-1 and beta-2 integrins in the membrane of monocyte/macrophages. Interacts with CD63; identified in a complex with CD63 and ITGB3. Associates with CR2/CD21 and with PTGFRN/CD9P1. Part of a complex composed of CD9, CD81, PTGFRN and IGSF8. Interacts directly with IGSF8. Interacts with PDPN; this interaction is homophilic and attenuates platelet aggregation and pulmonary metastasis induced by PDPN. Interacts (on T cell side) with CD81 at immunological synapses between antigen-presenting cells and T cells. In terms of processing, palmitoylated at a low, basal level in unstimulated platelets. The level of palmitoylation increases when platelets are activated by thrombin (in vitro). The protein exists in three forms with molecular masses between 22 and 27 kDa, and is known to carry covalently linked fatty acids. Palmitoylation by ZDHHC2 regulates CD9 expression, association with other tetraspanin family proteins and function in cell adhesion. In terms of tissue distribution, detected in platelets (at protein level). Expressed by a variety of hematopoietic and epithelial cells.

The protein localises to the cell membrane. It localises to the membrane. It is found in the secreted. Its subcellular location is the extracellular exosome. Its function is as follows. Integral membrane protein associated with integrins, which regulates different processes, such as sperm-egg fusion, platelet activation and aggregation, and cell adhesion. Present at the cell surface of oocytes and plays a key role in sperm-egg fusion, possibly by organizing multiprotein complexes and the morphology of the membrane required for the fusion. In myoblasts, associates with CD81 and PTGFRN and inhibits myotube fusion during muscle regeneration. In macrophages, associates with CD81 and beta-1 and beta-2 integrins, and prevents macrophage fusion into multinucleated giant cells specialized in ingesting complement-opsonized large particles. Also prevents the fusion between mononuclear cell progenitors into osteoclasts in charge of bone resorption. Acts as a receptor for PSG17. Involved in platelet activation and aggregation. Regulates paranodal junction formation. Involved in cell adhesion, cell motility and tumor metastasis. This chain is CD9 antigen, found in Homo sapiens (Human).